The following is a 149-amino-acid chain: Conglutin delta 3 (149 aa).

Residues 1–22 (MAKLTILIALVAALVLVVHTSA) form the signal peptide. 4 disulfides stabilise this stretch: C30–C98, C42–C86, C87–C134, and C100–C142.

The protein belongs to the 2S seed storage albumins family. As to quaternary structure, heterodimer of a small chain and a large chain; disulfide-linked.

The protein resides in the endoplasmic reticulum. The sequence is that of Conglutin delta 3 from Lupinus angustifolius (Narrow-leaved blue lupine).